A 527-amino-acid chain; its full sequence is 4-alpha-glucanotransferase (527 aa).

Belongs to the disproportionating enzyme family.

The protein resides in the cytoplasm. It carries out the reaction Transfers a segment of a (1-&gt;4)-alpha-D-glucan to a new position in an acceptor, which may be glucose or a (1-&gt;4)-alpha-D-glucan.. This Chlamydia trachomatis serovar D (strain ATCC VR-885 / DSM 19411 / UW-3/Cx) protein is 4-alpha-glucanotransferase (malQ).